Here is a 450-residue protein sequence, read N- to C-terminus: Tubulin alpha-1 chain (450 aa).

GTP-binding residues include Q11, E71, G144, T145, T179, N206, and N228. Mg(2+) is bound at residue E71. The active site involves E254.

The protein belongs to the tubulin family. Dimer of alpha and beta chains. A typical microtubule is a hollow water-filled tube with an outer diameter of 25 nm and an inner diameter of 15 nM. Alpha-beta heterodimers associate head-to-tail to form protofilaments running lengthwise along the microtubule wall with the beta-tubulin subunit facing the microtubule plus end conferring a structural polarity. Microtubules usually have 13 protofilaments but different protofilament numbers can be found in some organisms and specialized cells. Mg(2+) serves as cofactor. Undergoes a tyrosination/detyrosination cycle, the cyclic removal and re-addition of a C-terminal tyrosine residue by the enzymes tubulin tyrosine carboxypeptidase (TTCP) and tubulin tyrosine ligase (TTL), respectively.

The protein resides in the cytoplasm. The protein localises to the cytoskeleton. It carries out the reaction GTP + H2O = GDP + phosphate + H(+). Functionally, tubulin is the major constituent of microtubules, a cylinder consisting of laterally associated linear protofilaments composed of alpha- and beta-tubulin heterodimers. Microtubules grow by the addition of GTP-tubulin dimers to the microtubule end, where a stabilizing cap forms. Below the cap, tubulin dimers are in GDP-bound state, owing to GTPase activity of alpha-tubulin. The protein is Tubulin alpha-1 chain (TUBA1) of Oryza sativa subsp. japonica (Rice).